The sequence spans 429 residues: Phosphomethylpyrimidine synthase (429 aa).

Residues N66, M94, Y123, H162, 184-186 (SRG), 225-228 (DALR), and E264 contribute to the substrate site. Residue H268 participates in Zn(2+) binding. Position 291 (Y291) interacts with substrate. H332 lines the Zn(2+) pocket. 3 residues coordinate [4Fe-4S] cluster: C408, C411, and C415.

This sequence belongs to the ThiC family. [4Fe-4S] cluster is required as a cofactor.

The catalysed reaction is 5-amino-1-(5-phospho-beta-D-ribosyl)imidazole + S-adenosyl-L-methionine = 4-amino-2-methyl-5-(phosphooxymethyl)pyrimidine + CO + 5'-deoxyadenosine + formate + L-methionine + 3 H(+). It functions in the pathway cofactor biosynthesis; thiamine diphosphate biosynthesis. In terms of biological role, catalyzes the synthesis of the hydroxymethylpyrimidine phosphate (HMP-P) moiety of thiamine from aminoimidazole ribotide (AIR) in a radical S-adenosyl-L-methionine (SAM)-dependent reaction. The sequence is that of Phosphomethylpyrimidine synthase from Sulfurisphaera tokodaii (strain DSM 16993 / JCM 10545 / NBRC 100140 / 7) (Sulfolobus tokodaii).